The following is a 421-amino-acid chain: Histone-lysine N-methyltransferase SUV39H1 (421 aa).

The region spanning 46 to 104 (FEVEYLWNYKKVQDQELYLVKWKYYPDSESTWEPRHHLKCNNLLKQFHLDLERELLRRA) is the Chromo domain. In terms of domain architecture, Pre-SET spans 189–249 (AGCKCRDCFS…SCPNRVVQKG (61 aa)). Zn(2+)-binding residues include Cys191, Cys193, Cys196, Cys203, Cys204, Cys231, Cys235, Cys237, and Cys241. In terms of domain architecture, SET spans 252–375 (YKFCIFRTSD…TGEELTFDYN (124 aa)). S-adenosyl-L-methionine-binding positions include 263 to 265 (RGW), Tyr306, and 332 to 333 (NH). The Zn(2+) site is built by Cys335, Cys409, Cys411, and Cys416. The Post-SET domain maps to 405 to 421 (VRVECKCGVSSCRKYLF).

This sequence belongs to the class V-like SAM-binding methyltransferase superfamily. Histone-lysine methyltransferase family. Suvar3-9 subfamily.

It is found in the nucleus. It localises to the chromosome. The protein localises to the centromere. The enzyme catalyses L-lysyl(9)-[histone H3] + 3 S-adenosyl-L-methionine = N(6),N(6),N(6)-trimethyl-L-lysyl(9)-[histone H3] + 3 S-adenosyl-L-homocysteine + 3 H(+). Histone methyltransferase that specifically trimethylates 'Lys-9' of histone H3 using monomethylated H3 'Lys-9' as substrate. H3 'Lys-9' trimethylation represents a specific tag for epigenetic transcriptional repression by recruiting HP1 (CBX1, CBX3 and/or CBX5) proteins to methylated histones. Mainly functions in heterochromatin regions, thereby playing a central role in the establishment of constitutive heterochromatin at pericentric and telomere regions. H3 'Lys-9' trimethylation is also required to direct DNA methylation at pericentric repeats. SUV39H1 is targeted to histone H3 via its interaction with RB1 and is involved in many processes. The polypeptide is Histone-lysine N-methyltransferase SUV39H1 (suv39h1) (Xenopus laevis (African clawed frog)).